Reading from the N-terminus, the 324-residue chain is Acetyl-coenzyme A carboxylase carboxyl transferase subunit alpha (324 aa).

In terms of domain architecture, CoA carboxyltransferase C-terminal spans 37-291 (KLDKRLDRLK…QEYVLQEWLK (255 aa)).

Belongs to the AccA family. In terms of assembly, acetyl-CoA carboxylase is a heterohexamer composed of biotin carboxyl carrier protein (AccB), biotin carboxylase (AccC) and two subunits each of ACCase subunit alpha (AccA) and ACCase subunit beta (AccD).

Its subcellular location is the cytoplasm. The catalysed reaction is N(6)-carboxybiotinyl-L-lysyl-[protein] + acetyl-CoA = N(6)-biotinyl-L-lysyl-[protein] + malonyl-CoA. It functions in the pathway lipid metabolism; malonyl-CoA biosynthesis; malonyl-CoA from acetyl-CoA: step 1/1. Functionally, component of the acetyl coenzyme A carboxylase (ACC) complex. First, biotin carboxylase catalyzes the carboxylation of biotin on its carrier protein (BCCP) and then the CO(2) group is transferred by the carboxyltransferase to acetyl-CoA to form malonyl-CoA. The chain is Acetyl-coenzyme A carboxylase carboxyl transferase subunit alpha from Chlamydia trachomatis serovar D (strain ATCC VR-885 / DSM 19411 / UW-3/Cx).